Consider the following 359-residue polypeptide: Heat-inducible transcription repressor HrcA (359 aa).

It belongs to the HrcA family.

Functionally, negative regulator of class I heat shock genes (grpE-dnaK-dnaJ and groELS operons). Prevents heat-shock induction of these operons. The polypeptide is Heat-inducible transcription repressor HrcA (Sinorhizobium fredii (strain NBRC 101917 / NGR234)).